The chain runs to 207 residues: Small ribosomal subunit protein uS4 (207 aa).

A disordered region spans residues 30–53 (DKSKFDTKPGQHGRTSGQRTSDFG). The span at 42–52 (GRTSGQRTSDF) shows a compositional bias: polar residues. The S4 RNA-binding domain maps to 97-157 (SRLDNVVYRM…EKSKKQARIV (61 aa)).

It belongs to the universal ribosomal protein uS4 family. Part of the 30S ribosomal subunit. Contacts protein S5. The interaction surface between S4 and S5 is involved in control of translational fidelity.

Functionally, one of the primary rRNA binding proteins, it binds directly to 16S rRNA where it nucleates assembly of the body of the 30S subunit. In terms of biological role, with S5 and S12 plays an important role in translational accuracy. This chain is Small ribosomal subunit protein uS4, found in Delftia acidovorans (strain DSM 14801 / SPH-1).